We begin with the raw amino-acid sequence, 183 residues long: dCTP deaminase (183 aa).

DCTP is bound by residues 97–102 (RSSFAR) and Asp-113. Glu-123 serves as the catalytic Proton donor/acceptor. DCTP-binding residues include Tyr-155 and Gln-162.

Belongs to the dCTP deaminase family. As to quaternary structure, homotrimer.

The catalysed reaction is dCTP + H2O + H(+) = dUTP + NH4(+). The protein operates within pyrimidine metabolism; dUMP biosynthesis; dUMP from dCTP (dUTP route): step 1/2. Catalyzes the deamination of dCTP to dUTP. The chain is dCTP deaminase from Sulfurisphaera tokodaii (strain DSM 16993 / JCM 10545 / NBRC 100140 / 7) (Sulfolobus tokodaii).